The primary structure comprises 255 residues: Imidazole glycerol phosphate synthase subunit HisF (255 aa).

Catalysis depends on residues D11 and D130.

It belongs to the HisA/HisF family. Heterodimer of HisH and HisF.

It localises to the cytoplasm. It carries out the reaction 5-[(5-phospho-1-deoxy-D-ribulos-1-ylimino)methylamino]-1-(5-phospho-beta-D-ribosyl)imidazole-4-carboxamide + L-glutamine = D-erythro-1-(imidazol-4-yl)glycerol 3-phosphate + 5-amino-1-(5-phospho-beta-D-ribosyl)imidazole-4-carboxamide + L-glutamate + H(+). Its pathway is amino-acid biosynthesis; L-histidine biosynthesis; L-histidine from 5-phospho-alpha-D-ribose 1-diphosphate: step 5/9. Functionally, IGPS catalyzes the conversion of PRFAR and glutamine to IGP, AICAR and glutamate. The HisF subunit catalyzes the cyclization activity that produces IGP and AICAR from PRFAR using the ammonia provided by the HisH subunit. This Rhodopseudomonas palustris (strain ATCC BAA-98 / CGA009) protein is Imidazole glycerol phosphate synthase subunit HisF.